The chain runs to 471 residues: MENFKHLPEPFRIRVIEPVKRTTRAYRDEAILKAGMNLFLLDSEDIFIDLLTDSGTGAVTQDMQAAMLRGDEAYSGSRSYYALANAVKEIFGYEYTIPTHQGRGAEQIYIPVLIKKREQEKGLDRNKMVVFSNYFFDTTQGHSQLNGATVRNVYIKEAFDTDVDHDFKGNFDLEKLEQGILEVGANNVPYIVCTITCNSAGGQPVSLANMKAMYQIARKYDIPVIMDSARFAENAYFIQQREAEYKDWTIEQITYESYKYADALAMSAKKDAMVPIGGLLCFKDNSMEDVYNECRTLCVVQEGFPTYGGLEGGAMERLAVGLRDGMRQDWLAYRISQIEYLVQGLEKIGVVCQQPGGHAAFVDAGKLLPHIPAEQFPAQALACELYKVAGIRSVEIGSLLLGRDPKTGQQLPCPAELLRLTIPRATYTQTHMDFIIEAFKQVKENAKNIKGLDFTYEPKVLRHFTARLKEI.

Position 270 is an N6-(pyridoxal phosphate)lysine (Lys270).

The protein belongs to the beta-eliminating lyase family. In terms of assembly, homotetramer. Pyridoxal 5'-phosphate is required as a cofactor.

The catalysed reaction is L-tryptophan + H2O = indole + pyruvate + NH4(+). Its pathway is amino-acid degradation; L-tryptophan degradation via pyruvate pathway; indole and pyruvate from L-tryptophan: step 1/1. The protein is Tryptophanase of Histophilus somni (strain 2336) (Haemophilus somnus).